A 122-amino-acid polypeptide reads, in one-letter code: Anti-sigma-F factor antagonist RsfB (122 aa).

Residues Ile7–Val115 enclose the STAS domain. Ser61 is subject to Phosphoserine.

Belongs to the anti-sigma-factor antagonist family. In terms of assembly, interacts with anti-sigma-F factor RsbW (UsfX). Its phosphorylation may prevent this interaction. Putative phosphorylation on Ser-61 may prevent interaction with RsbW.

Positive regulator of sigma-F (SigF) activity. Binds to anti-sigma-F factor RsbW (UsfX) preventing its binding to SigF, thus activating transcription. This is Anti-sigma-F factor antagonist RsfB (rsfB) from Mycobacterium tuberculosis (strain CDC 1551 / Oshkosh).